Here is a 224-residue protein sequence, read N- to C-terminus: Peroxiredoxin-6 (224 aa).

A Thioredoxin domain is found at Leu4–Leu168. The tract at residues Asp30–Pro39 is required and sufficient for targeting to lysosomes and lamellar bodies. Cys46 (cysteine sulfenic acid (-SOH) intermediate; for peroxidase activity) is an active-site residue. Tyr88 bears the Phosphotyrosine mark. Residue Asp139 is the For phospholipase activity of the active site. Thr176 carries the post-translational modification Phosphothreonine; by MAPK.

Belongs to the peroxiredoxin family. Prx6 subfamily. In terms of assembly, homodimer. Interacts with GSTP1; mediates PRDX6 glutathionylation and regeneration. Post-translationally, irreversibly inactivated by overoxidation of Cys-46 to sulfinic acid (Cys-SO(2)H) and sulfonic acid (Cys-SO(3)H) forms upon oxidative stress. In terms of processing, phosphorylation at Thr-176 by MAP kinases increases the phospholipase activity of the enzyme. The phosphorylated form exhibits a greater lysophosphatidylcholine acyltransferase activity compared to the non-phosphorylated form.

The protein localises to the cytoplasm. Its subcellular location is the lysosome. It catalyses the reaction a hydroperoxide + 2 glutathione = an alcohol + glutathione disulfide + H2O. The enzyme catalyses a 1,2-diacyl-sn-glycero-3-phosphocholine + H2O = a 1-acyl-sn-glycero-3-phosphocholine + a fatty acid + H(+). The catalysed reaction is a 1-acyl-sn-glycero-3-phosphocholine + an acyl-CoA = a 1,2-diacyl-sn-glycero-3-phosphocholine + CoA. It carries out the reaction 1-hexadecanoyl-sn-glycero-3-phosphocholine + hexadecanoyl-CoA = 1,2-dihexadecanoyl-sn-glycero-3-phosphocholine + CoA. It catalyses the reaction 1,2-dihexadecanoyl-sn-glycero-3-phosphocholine + H2O = 1-hexadecanoyl-sn-glycero-3-phosphocholine + hexadecanoate + H(+). Functionally, thiol-specific peroxidase that catalyzes the reduction of hydrogen peroxide and organic hydroperoxides to water and alcohols, respectively. Can reduce H(2)O(2) and short chain organic, fatty acid, and phospholipid hydroperoxides. Also has phospholipase activity, and can therefore either reduce the oxidized sn-2 fatty acyl group of phospholipids (peroxidase activity) or hydrolyze the sn-2 ester bond of phospholipids (phospholipase activity). These activities are dependent on binding to phospholipids at acidic pH and to oxidized phospholipds at cytosolic pH. Plays a role in cell protection against oxidative stress by detoxifying peroxides and in phospholipid homeostasis. Exhibits acyl-CoA-dependent lysophospholipid acyltransferase which mediates the conversion of lysophosphatidylcholine (1-acyl-sn-glycero-3-phosphocholine or LPC) into phosphatidylcholine (1,2-diacyl-sn-glycero-3-phosphocholine or PC). Shows a clear preference for LPC as the lysophospholipid and for palmitoyl CoA as the fatty acyl substrate. This is Peroxiredoxin-6 (PRDX6) from Gallus gallus (Chicken).